A 280-amino-acid polypeptide reads, in one-letter code: MAKNNVSTFVSAKHNNEKITMLTAYDYSMAKLMDESGINGILVGDSLGMVCLGYKDTLSVTMEDMLHHIKAVTRGAKDALVVGDMPFMSYQTSVYDAVKNAGRIIQEGLAGAVKLEGGVSVYEQVKAIVKAQIPVMGHIGLTPQSVNVFGGFKVQGKDESKAKNIIEDAKRLEEAGAFSIVLEGIPYKLAKIITETVSIPTIGIGAGKYCDGQILVYQDMLGLFSDFKPKFVKSYGNAGEVIRKAFKDYITEVKEGIFPDEEYSFKMDDSIIDKCIKEGV.

The Mg(2+) site is built by D45 and D84. 3-methyl-2-oxobutanoate contacts are provided by residues 45 to 46 (DS), D84, and K114. E116 is a Mg(2+) binding site. Residue E183 is the Proton acceptor of the active site.

Belongs to the PanB family. In terms of assembly, homodecamer; pentamer of dimers. Mg(2+) serves as cofactor.

It localises to the cytoplasm. It carries out the reaction 3-methyl-2-oxobutanoate + (6R)-5,10-methylene-5,6,7,8-tetrahydrofolate + H2O = 2-dehydropantoate + (6S)-5,6,7,8-tetrahydrofolate. Its pathway is cofactor biosynthesis; (R)-pantothenate biosynthesis; (R)-pantoate from 3-methyl-2-oxobutanoate: step 1/2. Functionally, catalyzes the reversible reaction in which hydroxymethyl group from 5,10-methylenetetrahydrofolate is transferred onto alpha-ketoisovalerate to form ketopantoate. The chain is 3-methyl-2-oxobutanoate hydroxymethyltransferase from Clostridium kluyveri (strain ATCC 8527 / DSM 555 / NBRC 12016 / NCIMB 10680 / K1).